The sequence spans 63 residues: Small ribosomal subunit protein eS17 (63 aa).

The protein belongs to the eukaryotic ribosomal protein eS17 family.

The chain is Small ribosomal subunit protein eS17 (rps17e) from Haloarcula marismortui (strain ATCC 43049 / DSM 3752 / JCM 8966 / VKM B-1809) (Halobacterium marismortui).